Reading from the N-terminus, the 342-residue chain is Spermidine synthase (342 aa).

The disordered stretch occupies residues methionine 9–glutamate 42. The PABS domain occupies proline 52–threonine 289. Glutamine 83 contacts S-adenosyl 3-(methylsulfanyl)propylamine. Tyrosine 113 is a putrescine binding site. S-adenosyl 3-(methylsulfanyl)propylamine-binding positions include glutamine 114, aspartate 138, glutamate 158, aspartate 189 to glycine 190, and aspartate 208. Aspartate 208 serves as the catalytic Proton acceptor. Putrescine-binding positions include aspartate 208 to aspartate 211 and tyrosine 277.

It belongs to the spermidine/spermine synthase family.

The enzyme catalyses S-adenosyl 3-(methylsulfanyl)propylamine + putrescine = S-methyl-5'-thioadenosine + spermidine + H(+). Its pathway is amine and polyamine biosynthesis; spermidine biosynthesis; spermidine from putrescine: step 1/1. In Solanum lycopersicum (Tomato), this protein is Spermidine synthase (SPDSYN).